A 503-amino-acid chain; its full sequence is Mitochondrial antiviral-signaling protein (503 aa).

Residues 1-478 (MTFAEDKTYK…HCASSMPWAK (478 aa)) lie on the Cytoplasmic side of the membrane. Residues Lys7 and Lys10 each participate in a glycyl lysine isopeptide (Lys-Gly) (interchain with G-Cter in ubiquitin) cross-link. One can recognise a CARD domain in the interval 10 to 77 (KYIRDNHSKF…WVEVFIRALQ (68 aa)). The required for interaction with NLRX1 stretch occupies residues 10-77 (KYIRDNHSKF…WVEVFIRALQ (68 aa)). Cys79 carries the S-palmitoyl cysteine lipid modification. Residues 119–202 (GPSAFAPGHN…HQEQEPELGG (84 aa)) form a disordered region. The segment at 143-147 (PVQDT) is interaction with TRAF2. The segment covering 145-166 (QDTQPPESPVENSEQLLQTNSG) has biased composition (polar residues). Phosphoserine is present on residues Ser152, Ser157, Ser172, Ser186, and Ser220. Residues 153-158 (PVENSE) form an interaction with TRAF6 1 region. Residues 178-189 (PSPNQQALSPQP) show a composition bias toward polar residues. Residue Arg234 is modified to Asymmetric dimethylarginine. 2 positions are modified to phosphoserine: Ser251 and Ser256. A Glycyl lysine isopeptide (Lys-Gly) (interchain with G-Cter in ubiquitin) cross-link involves residue Lys302. Residues 337-503 (PSRVPASVAK…MLYRSRRLAQ (167 aa)) are interaction with DHX33. Residues 346–398 (KAPANTIPPERNSKQAKETPEGPATKVTTGGNQTGPNSSIRSLHSGPEMSKPG) form a disordered region. Positions 356–365 (RNSKQAKETP) are enriched in basic and acidic residues. Positions 371–387 (KVTTGGNQTGPNSSIRS) are enriched in polar residues. Residue Ser384 is modified to Phosphoserine. Residues 415–418 (LAIS) carry the pLxIS motif motif. Position 418 is a phosphoserine; by TBK1 (Ser418). The interaction with TRAF6 2 stretch occupies residues 431–436 (PEENEY). The segment at 446-466 (SPSADLLGSPEPLATQQPQEE) is disordered. A helical membrane pass occupies residues 479–496 (WLGATSALLAVFLAVMLY). The Mitochondrial intermembrane portion of the chain corresponds to 497 to 503 (RSRRLAQ).

Self-associates and polymerizes (via CARD domains) to form 400 nM long three-stranded helical filaments on mitochondria, filament nucleation requires interaction with RIGI whose CARD domains act as a template for filament assembly. Interacts with RIGI, IFIH1/MDA5, TRAF2, TRAF6 and C1QBP. May interact with FADD, RIPK1, IKBKE, CHUK and IKBKB. Interacts (when phosphorylated) with IRF3; following activation and phosphorylation on the pLxIS motif by TBK1, recruits IRF3. Interacts with NLRX1. Interaction with NLRX1 requires the CARD domain. Interacts with PSMA7. Interacts with TRAFD1. Interacts (via C-terminus) with PCBP2 in a complex containing MAVS/IPS1, PCBP2 and ITCH. Interacts with CYLD. Interacts with SRC. Interacts with DHX58/LGP2 and IKBKE. Interacts with STING1. Interacts with IFIT3 (via N-terminus). Interacts with TBK1 only in the presence of IFIT3. Interacts with TTLL12; the interaction prevents MAVS binding to TBK1 and IKBKE. Interacts with MUL1. Interacts with ANKRD17. Interacts with NDFIP1. Interacts with SMURF1; the interaction is mediated by NDFIP1 and leads to MAVS ubiquitination and degradation. Interacts (via C-terminus) with GPATCH3; the interaction is markedly increased upon viral infection. Directly interacts (via CARD domain) with ATG5 and ATG12, either as ATG5 and ATG12 monomers or as ATG12-ATG5 conjugates. Interacts with DHX33 (via the helicase C-terminal domain). Interacts with DDX3X (via C-terminus); this interaction may occur rapidly, but transiently after viral infection. The interaction with DDX3X potentiates MAVS-mediated IFNB induction. Conversely inhibition of this interaction prevents MAVS-mediated IFNB induction. Transiently interacts with TRAF3 early during viral infection. Interacts with CLPB. Interacts with TRAF3IP3. Interacts with TOMM70; the interaction is enhanced by virus infection. Interacts with ZNFX1. Interacts with DHX15. Interacts with N4BP3; this interaction promotes the polyubiquitination of MAVS. Interacts with TAX1BP1; this interaction induces MAVS polyubiquitination. Interacts with NLRP3; promoting NLRP3 recruitment to mitochondria and activation of the NLRP3 inflammasome. Interacts with ECSIT; this interaction bridges RIGI to the MAVS complex at the mitochondrion. Interacts with UBL7; this interaction promotes MAVS 'Lys-27'-linked ubiquitination leading to type I interferon production. Interacts (via transmembrane domain) with SMIM30/MAVI1 (via transmembrane domain); the interaction disrupts MAVS interaction with RIGI and inhibits MAVS aggregation, resulting in the repression of type I interferon signaling and innate immune responses. In terms of processing, following activation, phosphorylated by TBK1 at Ser-418 in the pLxIS motif. The phosphorylated pLxIS motif constitutes an IRF3-binding motif, leading to recruitment of the transcription factor IRF3 to induce type-I interferons and other cytokines. Ubiquitinated. Undergoes 'Lys-48'-linked polyubiquitination catalyzed by ITCH; ITCH-dependent polyubiquitination is mediated by the interaction with PCBP2 and leads to MAVS/IPS1 proteasomal degradation. Ubiquitinated by RNF125, leading to its degradation by the proteasome. Undergoes 'Lys-48'-linked ubiquitination catalyzed by SMURF1. Undergoes 'Lys-48'-linked ubiquitination catalyzed by MARCHF5 at Lys-7, leading to proteasomal degradation. Ubiquitinated via 'Lys-63'-linked ubiquitination at Lys-10 by TRIM31, promoting MAVS polymerization and formation of three-stranded helical filaments on mitochondria. Undergoes 'Lys-63'-linked ubiquitination leading to enhanced interaction between MAVS and TRAF2. Undergoes 'Lys-27'-linked ubiquitination by UBE2N and TRIM21 leading to enhanced interaction between MAVS and TBK1. Deubiquitinated by USP10 leading to attenuation of RIGI-mediated MAVS aggregation and production of type I interferon. Undergoes 'Lys-48'-linked polyubiquitination catalyzed by RNF115 leading to its degradation. Post-translationally, proteolytically cleaved by apoptotic caspases during apoptosis, leading to its inactivation. Cleavage by CASP3 during virus-induced apoptosis inactivates it, preventing cytokine overproduction. In terms of processing, palmitoylated by ZHDDC4. Palmitoylation promotes MAVS stabilization and activation by inhibiting 'Lys-48'- but facilitating 'Lys-63'-linked ubiquitination.

Its subcellular location is the mitochondrion outer membrane. It localises to the mitochondrion. The protein localises to the peroxisome. Adapter required for innate immune defense against viruses. Acts downstream of DHX33, RIGI and IFIH1/MDA5, which detect intracellular dsRNA produced during viral replication, to coordinate pathways leading to the activation of NF-kappa-B, IRF3 and IRF7, and to the subsequent induction of antiviral cytokines such as IFN-beta and RANTES (CCL5). Peroxisomal and mitochondrial MAVS act sequentially to create an antiviral cellular state. Upon viral infection, peroxisomal MAVS induces the rapid interferon-independent expression of defense factors that provide short-term protection, whereas mitochondrial MAVS activates an interferon-dependent signaling pathway with delayed kinetics, which amplifies and stabilizes the antiviral response. May activate the same pathways following detection of extracellular dsRNA by TLR3. May protect cells from apoptosis. Involved in NLRP3 inflammasome activation by mediating NLRP3 recruitment to mitochondria. This is Mitochondrial antiviral-signaling protein from Mus musculus (Mouse).